We begin with the raw amino-acid sequence, 104 residues long: MAAKIKKGDRVVVLAGKDKGKQGSVLQVLPKDNRVVVEGVNMVSRHTKPTQADPQGGIKNKEAALHVSNVAVVDSNGKPTRVGFKIEGDKKVRVAKTTGEVING.

This sequence belongs to the universal ribosomal protein uL24 family. As to quaternary structure, part of the 50S ribosomal subunit.

In terms of biological role, one of two assembly initiator proteins, it binds directly to the 5'-end of the 23S rRNA, where it nucleates assembly of the 50S subunit. One of the proteins that surrounds the polypeptide exit tunnel on the outside of the subunit. This is Large ribosomal subunit protein uL24 from Caulobacter vibrioides (strain ATCC 19089 / CIP 103742 / CB 15) (Caulobacter crescentus).